The chain runs to 2188 residues: Genome polyprotein (2188 aa).

Residue Gly2 is the site of N-myristoyl glycine; by host attachment. The Cytoplasmic segment spans residues 2 to 1503 (GAQVTRQQTG…HISRAFITLQ (1502 aa)). The N-acetylneuraminate site is built by Asp408, Arg412, Pro548, Asp549, Ile550, Arg834, Pro838, and Asn839. Residues His879 and Asp897 each act as for protease 2A activity in the active site. Residues Cys914 and Cys916 each contribute to the Zn(2+) site. Catalysis depends on Cys968, which acts as the For protease 2A activity. Residues Cys974 and His976 each coordinate Zn(2+). The interval 1108–1180 (SESWLKKFTE…EHSCPTTERQ (73 aa)) is membrane-binding. An oligomerization region spans residues 1108–1246 (SESWLKKFTE…SPGTGKSVAS (139 aa)). The segment at 1129-1133 (SQKID) is RNA-binding. Residues 1212–1370 (EKKINNYIQF…YKDSNKLDMS (159 aa)) form the SF3 helicase domain. ATP is bound at residue 1236 to 1243 (GSPGTGKS). The Zn(2+) site is built by Cys1376, Cys1389, and Cys1394. The segment at 1376 to 1394 (CKPDNCTPTNYKRCCPLIC) adopts a C4-type; degenerate zinc-finger fold. Residues 1421 to 1428 (EYRTRNST) form an RNA-binding region. The oligomerization stretch occupies residues 1432–1437 (LEALFQ). Residues 1504–1519 (AIATFVSIAGVVYVIY) lie within the membrane without spanning it. The Cytoplasmic segment spans residues 1520–2188 (KLFAGIQGPY…SLRRKWLDSF (669 aa)). At Tyr1529 the chain carries O-(5'-phospho-RNA)-tyrosine. The Peptidase C3 domain maps to 1549–1727 (GPGFDFAQAI…FAAMLLHSYF (179 aa)). Active-site for protease 3C activity residues include His1588, Glu1619, and Cys1695. One can recognise a RdRp catalytic domain in the interval 1954–2069 (GEIFAFDYTG…SYPHKIDPGL (116 aa)). Residues Asp1960 and Asp2055 each contribute to the Mg(2+) site.

It belongs to the picornaviruses polyprotein family. Interacts with capsid protein VP1 and capsid protein VP3 to form heterotrimeric protomers. In terms of assembly, interacts with capsid protein VP0, and capsid protein VP3 to form heterotrimeric protomers. Five protomers subsequently associate to form pentamers which serve as building blocks for the capsid. Interacts with capsid protein VP2, capsid protein VP3 and capsid protein VP4 following cleavage of capsid protein VP0. As to quaternary structure, interacts with capsid protein VP1 and capsid protein VP3 in the mature capsid. Interacts with capsid protein VP0 and capsid protein VP1 to form heterotrimeric protomers. Five protomers subsequently associate to form pentamers which serve as building blocks for the capsid. Interacts with capsid protein VP4 in the mature capsid. Interacts with protein 2C; this interaction may be important for virion morphogenesis. Interacts with host IRF7. In terms of assembly, interacts with capsid protein VP1 and capsid protein VP3. As to quaternary structure, homodimer. Homohexamer; forms a hexameric ring structure with 6-fold symmetry characteristic of AAA+ ATPases. Interacts (via N-terminus) with host RTN3 (via reticulon domain); this interaction is important for viral replication. Interacts with capsid protein VP3; this interaction may be important for virion morphogenesis. In terms of assembly, interacts with protein 3CD. As to quaternary structure, homodimer. Interacts with host GBF1. Interacts (via GOLD domain) with host ACBD3 (via GOLD domain); this interaction allows the formation of a viral protein 3A/ACBD3 heterotetramer with a 2:2 stoichiometry, which will stimulate the recruitment of host PI4KB in order to synthesize PI4P at the viral RNA replication sites. Interacts with RNA-directed RNA polymerase. In terms of assembly, interacts with host IFIH1/MDA5; this interaction inhibits host IFIH1. As to quaternary structure, interacts with protein 3AB and with RNA-directed RNA polymerase. Interacts with Viral protein genome-linked and with protein 3CD. Requires Mg(2+) as cofactor. In terms of processing, specific enzymatic cleavages in vivo by the viral proteases yield processing intermediates and the mature proteins. Myristoylation is required for the formation of pentamers during virus assembly. Further assembly of 12 pentamers and a molecule of genomic RNA generates the provirion. Post-translationally, during virion maturation, immature virions are rendered infectious following cleavage of VP0 into VP4 and VP2. This maturation seems to be an autocatalytic event triggered by the presence of RNA in the capsid and it is followed by a conformational change infectious virion. In terms of processing, myristoylation is required during RNA encapsidation and formation of the mature virus particle. VPg is uridylylated by the polymerase into VPg-pUpU. This acts as a nucleotide-peptide primer for the genomic RNA replication.

It is found in the virion. Its subcellular location is the host cytoplasm. The protein resides in the host cytoplasmic vesicle membrane. The protein localises to the host nucleus. It catalyses the reaction a ribonucleoside 5'-triphosphate + H2O = a ribonucleoside 5'-diphosphate + phosphate + H(+). The catalysed reaction is Selective cleavage of Tyr-|-Gly bond in the picornavirus polyprotein.. The enzyme catalyses RNA(n) + a ribonucleoside 5'-triphosphate = RNA(n+1) + diphosphate. It carries out the reaction Selective cleavage of Gln-|-Gly bond in the poliovirus polyprotein. In other picornavirus reactions Glu may be substituted for Gln, and Ser or Thr for Gly.. Its function is as follows. Component of immature procapsids, which is cleaved into capsid proteins VP4 and VP2 after maturation. Allows the capsid to remain inactive before the maturation step. In terms of biological role, forms an icosahedral capsid of pseudo T=3 symmetry with capsid proteins VP2 and VP3. The capsid is 300 Angstroms in diameter, composed of 60 copies of each capsid protein and enclosing the viral positive strand RNA genome. Capsid protein VP1 mainly forms the vertices of the capsid. Capsid protein VP1, together with VP3, interacts with host cell sialic acids to provide virion attachment to target host cells. This attachment induces virion internalization. After binding to its receptor, the capsid undergoes conformational changes. Capsid protein VP1 N-terminus (that contains an amphipathic alpha-helix) and capsid protein VP4 are externalized. Together, they shape a pore in the host membrane through which viral genome is translocated to host cell cytoplasm. Functionally, forms an icosahedral capsid of pseudo T=3 symmetry with capsid proteins VP2 and VP3. The capsid is 300 Angstroms in diameter, composed of 60 copies of each capsid protein and enclosing the viral positive strand RNA genome. Forms an icosahedral capsid of pseudo T=3 symmetry with capsid proteins VP2 and VP3. The capsid is 300 Angstroms in diameter, composed of 60 copies of each capsid protein and enclosing the viral positive strand RNA genome. Capsid protein VP3, together with VP1, interacts with host cell sialic acids to provide virion attachment to target host cells. In addition, inhibits the phosphorylation and nuclear translocation of host IRF7 and thereby suppresses downstream interferon production. Its function is as follows. Lies on the inner surface of the capsid shell. After binding to the host receptor, the capsid undergoes conformational changes. Capsid protein VP4 is released, Capsid protein VP1 N-terminus is externalized, and together, they shape a pore in the host membrane through which the viral genome is translocated into the host cell cytoplasm. In terms of biological role, cysteine protease that cleaves viral polyprotein and specific host proteins. It is responsible for the autocatalytic cleavage between the P1 and P2 regions, which is the first cleavage occurring in the polyprotein. Also cleaves the host translation initiation factor EIF4G1, in order to shut down the capped cellular mRNA translation. Inhibits the host nucleus-cytoplasm protein and RNA trafficking by cleaving host members of the nuclear pores. Counteracts stress granule formation probably by antagonizing its assembly or promoting its dissassembly. Also plays a role in the suppression of host innate immunity through cleavage of host TRAF3, a component of the signaling cascade required to produce type I interferons. Functionally, plays an essential role in the virus replication cycle by acting as a viroporin. Creates a pore in the host endoplasmic reticulum and as a consequence releases Ca2+ in the cytoplasm of infected cell. In turn, high levels of cytoplasmic calcium may trigger membrane trafficking and transport of viral ER-associated proteins to viroplasms, sites of viral genome replication. Induces and associates with structural rearrangements of intracellular membranes. Displays RNA-binding, nucleotide binding and NTPase activities. May play a role in virion morphogenesis and viral RNA encapsidation by interacting with the capsid protein VP3. Its function is as follows. Localizes the viral replication complex to the surface of membranous vesicles. Together with protein 3CD binds the Cis-Active RNA Element (CRE) which is involved in RNA synthesis initiation. Acts as a cofactor to stimulate the activity of 3D polymerase, maybe through a nucleid acid chaperone activity. In terms of biological role, localizes the viral replication complex to the surface of membranous vesicles. It inhibits host cell endoplasmic reticulum-to-Golgi apparatus transport and causes the disassembly of the Golgi complex, possibly through GBF1 interaction. This would result in depletion of MHC, trail receptors and IFN receptors at the host cell surface. Plays an essential role in viral RNA replication by recruiting ACBD3 and PI4KB at the viral replication sites, thereby allowing the formation of the rearranged membranous structures where viral replication takes place. Functionally, acts as a primer for viral RNA replication and remains covalently bound to viral genomic RNA. VPg is uridylylated prior to priming replication into VPg-pUpU. The oriI viral genomic sequence may act as a template for this. The VPg-pUpU is then used as primer on the genomic RNA poly(A) by the RNA-dependent RNA polymerase to replicate the viral genome. During genome replication, the VPg-RNA linkage is removed by the host TDP2, thereby accelerating replication. During the late stage of the replication cycle, host TDP2 is excluded from sites of viral RNA synthesis and encapsidation, allowing for the generation of progeny virions. Involved in the viral replication complex and viral polypeptide maturation. It exhibits protease activity with a specificity and catalytic efficiency that is different from protease 3C. Protein 3CD lacks polymerase activity. Protein 3CD binds to the 5'UTR of the viral genome. Its function is as follows. Major viral protease that mediates proteolytic processing of the polyprotein. Cleaves host EIF5B, contributing to host translation shutoff. Also cleaves host PABPC1, contributing to host translation shutoff. Binds and inhibits host IFIH1/MDA5, thereby inhibiting the type-I IFN production and the establishment of the antiviral state. Cleaves host MAP3K7/TAK1, resulting in inhibition of TRAF6-triggered NF-kappa-B induction. Cleaves host TICAM1; this interaction allows the virus to disrupt host TLR3 signaling. Cleaves host IRF7, resulting in inhibition of type-I IFN production. Cleaves host NLRP1, triggers host N-glycine-mediated degradation of the autoinhibitory NLRP1 N-terminal fragment. In terms of biological role, replicates the viral genomic RNA on the surface of intracellular membranes. May form linear arrays of subunits that propagate along a strong head-to-tail interaction called interface-I. Covalently attaches UMP to a tyrosine of VPg, which is used to prime RNA synthesis. The positive stranded RNA genome is first replicated at virus induced membranous vesicles, creating a dsRNA genomic replication form. This dsRNA is then used as template to synthesize positive stranded RNA genomes. ss(+)RNA genomes are either translated, replicated or encapsidated. In Human enterovirus D68 (EV68), this protein is Genome polyprotein.